We begin with the raw amino-acid sequence, 401 residues long: Phosphoglycerate kinase (401 aa).

Substrate is bound by residues 21-23 (DLN), R36, 59-62 (HQGR), R116, and R156. ATP-binding positions include E331 and 357–360 (GGDT).

The protein belongs to the phosphoglycerate kinase family.

Its subcellular location is the cytoplasm. The enzyme catalyses (2R)-3-phosphoglycerate + ATP = (2R)-3-phospho-glyceroyl phosphate + ADP. Its pathway is carbohydrate degradation; glycolysis; pyruvate from D-glyceraldehyde 3-phosphate: step 2/5. The polypeptide is Phosphoglycerate kinase (pgk) (Haloarcula vallismortis (Halobacterium vallismortis)).